A 266-amino-acid polypeptide reads, in one-letter code: Hemin import ATP-binding protein HmuV (266 aa).

Residues 12–248 form the ABC transporter domain; the sequence is LEANQLSYHV…ETLTRWYQAD (237 aa). An ATP-binding site is contributed by 44 to 51; sequence GPNGAGKS.

It belongs to the ABC transporter superfamily. Heme (hemin) importer (TC 3.A.1.14.5) family. In terms of assembly, the complex is composed of two ATP-binding proteins (HmuV), two transmembrane proteins (HmuU) and a solute-binding protein (HmuT).

The protein resides in the cell inner membrane. Part of the ABC transporter complex HmuTUV involved in hemin import. Responsible for energy coupling to the transport system. The protein is Hemin import ATP-binding protein HmuV of Yersinia enterocolitica.